Reading from the N-terminus, the 435-residue chain is Serine hydroxymethyltransferase (435 aa).

(6S)-5,6,7,8-tetrahydrofolate contacts are provided by residues L133 and 137–139; that span reads GHL. The residue at position 242 (K242) is an N6-(pyridoxal phosphate)lysine.

Belongs to the SHMT family. In terms of assembly, homodimer. The cofactor is pyridoxal 5'-phosphate.

It localises to the cytoplasm. The catalysed reaction is (6R)-5,10-methylene-5,6,7,8-tetrahydrofolate + glycine + H2O = (6S)-5,6,7,8-tetrahydrofolate + L-serine. It participates in one-carbon metabolism; tetrahydrofolate interconversion. Its pathway is amino-acid biosynthesis; glycine biosynthesis; glycine from L-serine: step 1/1. Catalyzes the reversible interconversion of serine and glycine with tetrahydrofolate (THF) serving as the one-carbon carrier. This reaction serves as the major source of one-carbon groups required for the biosynthesis of purines, thymidylate, methionine, and other important biomolecules. Also exhibits THF-independent aldolase activity toward beta-hydroxyamino acids, producing glycine and aldehydes, via a retro-aldol mechanism. The polypeptide is Serine hydroxymethyltransferase (Hyphomonas neptunium (strain ATCC 15444)).